Consider the following 184-residue polypeptide: Adenine phosphoribosyltransferase (184 aa).

It belongs to the purine/pyrimidine phosphoribosyltransferase family. Homodimer.

The protein resides in the cytoplasm. The catalysed reaction is AMP + diphosphate = 5-phospho-alpha-D-ribose 1-diphosphate + adenine. It participates in purine metabolism; AMP biosynthesis via salvage pathway; AMP from adenine: step 1/1. Catalyzes a salvage reaction resulting in the formation of AMP, that is energically less costly than de novo synthesis. This chain is Adenine phosphoribosyltransferase, found in Mycobacterium marinum (strain ATCC BAA-535 / M).